A 244-amino-acid polypeptide reads, in one-letter code: E3 ubiquitin-protein ligase RNF166 (244 aa).

Positions 10-30 (AQRPQAPGPGPPRPPPPAGPA) are disordered. Positions 15 to 28 (APGPGPPRPPPPAG) are enriched in pro residues. An RING-type zinc finger spans residues 40–80 (CPICLEVFHRAVGIAGCGHTFCGECLQPCLQVPSPLCPLCR). 4 residues coordinate Zn(2+): Cys105, Cys108, His120, and Cys124. The C2HC RNF-type zinc-finger motif lies at 105-124 (CRGCSKKVTLAKMRSHVSSC). Residues 228 to 244 (DEEAALQAALALSLSEN) enclose the UIM domain.

It is found in the cytoplasm. It catalyses the reaction S-ubiquitinyl-[E2 ubiquitin-conjugating enzyme]-L-cysteine + [acceptor protein]-L-lysine = [E2 ubiquitin-conjugating enzyme]-L-cysteine + N(6)-ubiquitinyl-[acceptor protein]-L-lysine.. Its pathway is protein modification; protein ubiquitination. Its function is as follows. E3 ubiquitin-protein ligase that promotes the ubiquitination of different substrates. In Gallus gallus (Chicken), this protein is E3 ubiquitin-protein ligase RNF166 (RNF166).